The chain runs to 60 residues: Large ribosomal subunit protein bL32 (60 aa).

Basic residues predominate over residues 1-16 (MAVPRNRHSNARKNIR). Positions 1–20 (MAVPRNRHSNARKNIRRSHD) are disordered.

Belongs to the bacterial ribosomal protein bL32 family.

The sequence is that of Large ribosomal subunit protein bL32 (rpmF) from Chlamydia pneumoniae (Chlamydophila pneumoniae).